We begin with the raw amino-acid sequence, 202 residues long: Cryptic protein (202 aa).

A signal peptide spans 1 to 35; sequence MRANSPTQGISLKMHQARPLFLVTVALQLIGLGYS. Residue asparagine 65 is glycosylated (N-linked (GlcNAc...) asparagine). In terms of domain architecture, EGF-like spans 94 to 123; that stretch reads PVSRCCHNGGTCVLGSFCVCPAYFTGRYCE. Disulfide bonds link cysteine 98-cysteine 105, cysteine 99-cysteine 111, and cysteine 113-cysteine 122. Residue aspartate 166 is the site of GPI-anchor amidated aspartate attachment. Positions 167–202 are cleaved as a propeptide — removed in mature form; it reads LKSFLSSGARGSRECSIPSLLLLVLCLLLQGVAGKG.

Belongs to the EGF-CFC (Cripto-1/FRL1/Cryptic) family. Post-translationally, N-glycosylated. As to expression, no expressed in adult tissues.

Its subcellular location is the cell membrane. It is found in the secreted. Functionally, nodal coreceptor involved in the correct establishment of the left-right axis. May play a role in mesoderm and/or neural patterning during gastrulation. The polypeptide is Cryptic protein (Cfc1) (Mus musculus (Mouse)).